Reading from the N-terminus, the 272-residue chain is 4-diphosphocytidyl-2-C-methyl-D-erythritol kinase (272 aa).

The active site involves K14. An ATP-binding site is contributed by 92–102 (PMGGGLGGGSS). Residue D132 is part of the active site.

This sequence belongs to the GHMP kinase family. IspE subfamily.

It carries out the reaction 4-CDP-2-C-methyl-D-erythritol + ATP = 4-CDP-2-C-methyl-D-erythritol 2-phosphate + ADP + H(+). The protein operates within isoprenoid biosynthesis; isopentenyl diphosphate biosynthesis via DXP pathway; isopentenyl diphosphate from 1-deoxy-D-xylulose 5-phosphate: step 3/6. Its function is as follows. Catalyzes the phosphorylation of the position 2 hydroxy group of 4-diphosphocytidyl-2C-methyl-D-erythritol. This is 4-diphosphocytidyl-2-C-methyl-D-erythritol kinase from Fervidobacterium nodosum (strain ATCC 35602 / DSM 5306 / Rt17-B1).